The chain runs to 116 residues: RNA guanine-N7 methyltransferase activating subunit (116 aa).

Residues 1-55 (MAEALGAQELYEKMFEQRFTANDKEYQEYLKREQDQPPIVEDWKMGNQRNTDRYR) form an interaction with RNMT region. The interval 31–116 (KREQDQPPIV…SNQRFHSDRY (86 aa)) is disordered. Positions 36–42 (QPPIVED) match the RNMT-activating domain motif. The tract at residues 56 to 116 (DNRHHRGWDG…SNQRFHSDRY (61 aa)) is RNA-binding. Residues 67–78 (QNWSSNSYNQSY) are compositionally biased toward low complexity. Residues 97 to 110 (YQQGHYTHNPSNQR) show a composition bias toward polar residues.

Belongs to the RAM family.

The protein localises to the nucleus. In terms of biological role, regulatory subunit of the mRNA-capping methyltransferase RNMT:RAMAC complex that methylates the N7 position of the added guanosine to the 5'-cap structure of mRNAs. Promotes the recruitment of the methyl donor, S-adenosyl-L-methionine, to RNMT. Regulates RNMT expression by a post-transcriptional stabilizing mechanism. Binds RNA. This Xenopus tropicalis (Western clawed frog) protein is RNA guanine-N7 methyltransferase activating subunit (ramac).